A 240-amino-acid chain; its full sequence is Protein CDV3 homolog A (240 aa).

A compositionally biased stretch (basic and acidic residues) spans 1–15; that stretch reads MAEPQEKSLDDFFAK. A disordered region spans residues 1 to 204; it reads MAEPQEKSLD…TESRREKEME (204 aa). Position 2 is an N-acetylalanine (Ala2). Residues 27 to 52 show a composition bias toward low complexity; it reads SGSAAGSRGSARPPDGAPSSSSSMSG. Residues 57–73 show a composition bias toward basic and acidic residues; it reads VKKEKSGKSDNPDQLQE. Composition is skewed to polar residues over residues 127–141 and 181–192; these read DKSSGPWNKTSQAQA and SDTQFPSLQATA. The span at 193–204 shows a compositional bias: basic and acidic residues; the sequence is KHTESRREKEME.

This sequence belongs to the CDV3 family.

The protein resides in the cytoplasm. The protein is Protein CDV3 homolog A (cdv3-a) of Xenopus laevis (African clawed frog).